The following is a 430-amino-acid chain: Adenylosuccinate synthetase (430 aa).

GTP contacts are provided by residues 12-18 (GDEGKGK) and 40-42 (GHT). Catalysis depends on Asp-13, which acts as the Proton acceptor. Residues Asp-13 and Gly-40 each coordinate Mg(2+). IMP contacts are provided by residues 13–16 (DEGK), 38–41 (NAGH), Thr-128, Arg-142, Gln-223, Thr-238, and Arg-302. The active-site Proton donor is the His-41. 298–304 (VNTGRTR) provides a ligand contact to substrate. Residues Arg-304, 330 to 332 (KLD), and 412 to 414 (GVG) contribute to the GTP site.

It belongs to the adenylosuccinate synthetase family. As to quaternary structure, homodimer. Requires Mg(2+) as cofactor.

It is found in the cytoplasm. It catalyses the reaction IMP + L-aspartate + GTP = N(6)-(1,2-dicarboxyethyl)-AMP + GDP + phosphate + 2 H(+). It participates in purine metabolism; AMP biosynthesis via de novo pathway; AMP from IMP: step 1/2. Plays an important role in the de novo pathway of purine nucleotide biosynthesis. Catalyzes the first committed step in the biosynthesis of AMP from IMP. The chain is Adenylosuccinate synthetase from Corynebacterium ammoniagenes (Brevibacterium ammoniagenes).